The following is a 294-amino-acid chain: MTSTVPRELVHRAAVAEVFLTGWSRTAENRFALTAQWPRAHSYFTPVNGCYDPLLASETIRQVGTLLSHAEFGVSFGDQFLMWDLHHSVRPEQAGVGAAPADLELDVICSDIRRRGRRLAGMRYEVTLYCGGQVIATGGAAFDCTSPAVYQRLRGDRVGATGVRPLPQPLAPASVGRFLTTDVVLSATERPLEWQLRVDEQHPVLFDHPVDHVPGMVLMESARQAAQAIDPSRPFLPTTMRSEFSRYAELDRPCWIQAEPLPAADNGDRQVRVTGHQDDTTVFSCLIGTRGAAE.

Belongs to the AfsA family.

It carries out the reaction a medium-chain 3-oxoacyl-[ACP] + dihydroxyacetone phosphate = a (4-alkanoyl-5-oxo-2,5-dihydrofuran-3-yl)methyl phosphate + holo-[ACP] + H2O. Functionally, involved in the biosynthesis of virginiae butanolide (VB), a gamma-butyrolactone autoregulator that triggers the production of the streptogramin antibiotic virginiamycin. The polypeptide is 2-oxo-3-(phosphooxy)propyl 3-oxoalkanoate synthase (Streptomyces virginiae (Streptomyces cinnamonensis)).